The sequence spans 261 residues: Transmembrane protein 187 (261 aa).

6 helical membrane-spanning segments follow: residues 8–28, 43–63, 88–108, 113–133, 140–162, and 190–210; these read AFVH…TGIF, APVA…VNMA, VFAA…WTQW, VLDQ…CLYL, WLFL…HPQG, and SATY…LKLC.

Ubiquitous.

Its subcellular location is the membrane. In Homo sapiens (Human), this protein is Transmembrane protein 187 (TMEM187).